The chain runs to 544 residues: Prolyl 4-hydroxylase subunit alpha-3 (544 aa).

A signal peptide spans 1-19; the sequence is MGPAARLAALLAVLAFRAG. Positions 107 to 131 form a coiled coil; it reads LEASENIRALKDGYERVEQDLPAFE. The TPR repeat unit spans residues 227 to 260; it reads EDALDHLAFAYFQAGNVLCALNLSREFLLYSPDN. N-linked (GlcNAc...) asparagine glycosylation is present at Asn248. In terms of domain architecture, Fe2OG dioxygenase spans 422 to 529; it reads YAEYLQVVNY…KWVANKWIHE (108 aa). Positions 440 and 442 each coordinate Fe cation. Asn482 is a glycosylation site (N-linked (GlcNAc...) asparagine). His510 contacts Fe cation. Lys520 contacts 2-oxoglutarate.

The protein belongs to the P4HA family. As to quaternary structure, heterotetramer of two alpha-3 chains and two beta chains (the beta chain is the multi-functional PDI). The cofactor is Fe(2+). L-ascorbate is required as a cofactor. In terms of processing, N-glycosylation plays no role in the catalytic activity.

The protein resides in the endoplasmic reticulum lumen. It carries out the reaction L-prolyl-[collagen] + 2-oxoglutarate + O2 = trans-4-hydroxy-L-prolyl-[collagen] + succinate + CO2. Its function is as follows. Catalyzes the post-translational formation of 4-hydroxyproline in -Xaa-Pro-Gly- sequences in collagens and other proteins. This Bos taurus (Bovine) protein is Prolyl 4-hydroxylase subunit alpha-3 (P4HA3).